The following is a 167-amino-acid chain: Cell number regulator 3 (167 aa).

The chain crosses the membrane as a helical span at residues 67-84; sequence GMTSCGTSAALFALIQWL.

The protein belongs to the cornifelin family. In terms of tissue distribution, expressed only in pollen.

The protein localises to the membrane. The sequence is that of Cell number regulator 3 (CNR3) from Zea mays (Maize).